The sequence spans 133 residues: Ribosome-binding factor A (133 aa).

Belongs to the RbfA family. As to quaternary structure, monomer. Binds 30S ribosomal subunits, but not 50S ribosomal subunits or 70S ribosomes.

The protein localises to the cytoplasm. In terms of biological role, one of several proteins that assist in the late maturation steps of the functional core of the 30S ribosomal subunit. Associates with free 30S ribosomal subunits (but not with 30S subunits that are part of 70S ribosomes or polysomes). Required for efficient processing of 16S rRNA. May interact with the 5'-terminal helix region of 16S rRNA. This Alteromonas mediterranea (strain DSM 17117 / CIP 110805 / LMG 28347 / Deep ecotype) protein is Ribosome-binding factor A.